The sequence spans 598 residues: Elongation factor 4 (598 aa).

A tr-type G domain is found at glutamine 3–glutamate 185. GTP contacts are provided by residues aspartate 15 to threonine 20 and asparagine 132 to aspartate 135.

The protein belongs to the TRAFAC class translation factor GTPase superfamily. Classic translation factor GTPase family. LepA subfamily.

It is found in the cell inner membrane. The catalysed reaction is GTP + H2O = GDP + phosphate + H(+). Required for accurate and efficient protein synthesis under certain stress conditions. May act as a fidelity factor of the translation reaction, by catalyzing a one-codon backward translocation of tRNAs on improperly translocated ribosomes. Back-translocation proceeds from a post-translocation (POST) complex to a pre-translocation (PRE) complex, thus giving elongation factor G a second chance to translocate the tRNAs correctly. Binds to ribosomes in a GTP-dependent manner. The chain is Elongation factor 4 from Nitrosomonas europaea (strain ATCC 19718 / CIP 103999 / KCTC 2705 / NBRC 14298).